The primary structure comprises 368 residues: Molybdenum import ATP-binding protein ModC (368 aa).

An ABC transporter domain is found at 1–231 (MKGLQVAFKQ…QAMRPWQSFS (231 aa)). 33–40 (GRSGAGKT) provides a ligand contact to ATP. The Mop domain occupies 292 to 363 (KTSIRNIIEA…IKGVSVTQRD (72 aa)).

Belongs to the ABC transporter superfamily. Molybdate importer (TC 3.A.1.8) family. The complex is composed of two ATP-binding proteins (ModC), two transmembrane proteins (ModB) and a solute-binding protein (ModA).

Its subcellular location is the cell inner membrane. The catalysed reaction is molybdate(out) + ATP + H2O = molybdate(in) + ADP + phosphate + H(+). Part of the ABC transporter complex ModABC involved in molybdenum import. Responsible for energy coupling to the transport system. This chain is Molybdenum import ATP-binding protein ModC, found in Vibrio vulnificus (strain YJ016).